A 259-amino-acid polypeptide reads, in one-letter code: Large ribosomal subunit protein uL4 (259 aa).

Positions 47 to 67 (WGTDPMAGKRTTAESFGSGRG) are disordered.

It belongs to the universal ribosomal protein uL4 family. As to quaternary structure, part of the 50S ribosomal subunit.

Functionally, one of the primary rRNA binding proteins, this protein initially binds near the 5'-end of the 23S rRNA. It is important during the early stages of 50S assembly. It makes multiple contacts with different domains of the 23S rRNA in the assembled 50S subunit and ribosome. Its function is as follows. Forms part of the polypeptide exit tunnel. This Methanosphaera stadtmanae (strain ATCC 43021 / DSM 3091 / JCM 11832 / MCB-3) protein is Large ribosomal subunit protein uL4.